The following is a 640-amino-acid chain: Chaperone protein DnaK (640 aa).

Phosphothreonine; by autocatalysis is present on Thr-196. The segment covering 547–569 (GDKIPSDKRPALEGALEKLKDAT) has biased composition (basic and acidic residues). Disordered stretches follow at residues 547–575 (GDKIPSDKRPALEGALEKLKDATKNGTTE) and 595–640 (LYQA…GNGK). The segment covering 603 to 615 (TNASEPTQNTDGS) has biased composition (polar residues). Positions 625-634 (GEVENAEFEV) are enriched in acidic residues.

This sequence belongs to the heat shock protein 70 family.

In terms of biological role, acts as a chaperone. The chain is Chaperone protein DnaK from Chlorobium phaeobacteroides (strain DSM 266 / SMG 266 / 2430).